Here is a 405-residue protein sequence, read N- to C-terminus: Acetate kinase (405 aa).

Asn10 is a Mg(2+) binding site. Lys17 serves as a coordination point for ATP. Arg93 provides a ligand contact to substrate. Asp150 acts as the Proton donor/acceptor in catalysis. ATP is bound by residues 210–214, 284–286, and 332–336; these read HLGNG, DMR, and GVGEN. Mg(2+) is bound at residue Glu386.

It belongs to the acetokinase family. In terms of assembly, homodimer. Requires Mg(2+) as cofactor. The cofactor is Mn(2+).

The protein resides in the cytoplasm. It catalyses the reaction acetate + ATP = acetyl phosphate + ADP. It functions in the pathway metabolic intermediate biosynthesis; acetyl-CoA biosynthesis; acetyl-CoA from acetate: step 1/2. Functionally, catalyzes the formation of acetyl phosphate from acetate and ATP. Can also catalyze the reverse reaction. The protein is Acetate kinase of Streptomyces avermitilis (strain ATCC 31267 / DSM 46492 / JCM 5070 / NBRC 14893 / NCIMB 12804 / NRRL 8165 / MA-4680).